The chain runs to 344 residues: MRNVQAQPLVSPTEPMIDPFGRAVTYLRVSVTDRCDFRCTYCMAEHMTFLPKKDLLTLEELDRLCSVFIEKGVRKLRLTGGEPLVRKNIMHLIGNLSRHLKSGALDELTLTTNGSQLARFAGELADCGVRRINVSLDTLNPEKFRTITRWGDLSRVLEGIDAAQKAGIHVKINAVALKDFNDAEIPELIRWAHGRSMDVTLIETMPMGEIEFDRTDQYLPLSQVRADLASQFTLADIPYRTGGPARYVTISETGGRLGFITPMTHNFCESCNRVRLTCTGMLYMCLGQNDDADLRKALRESESDEHLSQAIDEAISRKPKGHDFIIDREHNRPSVARHMSLTGG.

A Radical SAM core domain is found at 19 to 245; it reads PFGRAVTYLR…DIPYRTGGPA (227 aa). Arg-28 provides a ligand contact to GTP. Residues Cys-35 and Cys-39 each coordinate [4Fe-4S] cluster. Tyr-41 lines the S-adenosyl-L-methionine pocket. Cys-42 serves as a coordination point for [4Fe-4S] cluster. Arg-77 lines the GTP pocket. Gly-81 contributes to the S-adenosyl-L-methionine binding site. Thr-111 is a GTP binding site. Ser-135 contacts S-adenosyl-L-methionine. Residue Lys-171 participates in GTP binding. An S-adenosyl-L-methionine-binding site is contributed by Met-205. Cys-268 and Cys-271 together coordinate [4Fe-4S] cluster. 273–275 serves as a coordination point for GTP; it reads RVR. Cys-285 contributes to the [4Fe-4S] cluster binding site.

Belongs to the radical SAM superfamily. MoaA family. Monomer and homodimer. It depends on [4Fe-4S] cluster as a cofactor.

The catalysed reaction is GTP + AH2 + S-adenosyl-L-methionine = (8S)-3',8-cyclo-7,8-dihydroguanosine 5'-triphosphate + 5'-deoxyadenosine + L-methionine + A + H(+). It functions in the pathway cofactor biosynthesis; molybdopterin biosynthesis. In terms of biological role, catalyzes the cyclization of GTP to (8S)-3',8-cyclo-7,8-dihydroguanosine 5'-triphosphate. The polypeptide is GTP 3',8-cyclase (Brucella ovis (strain ATCC 25840 / 63/290 / NCTC 10512)).